Reading from the N-terminus, the 374-residue chain is Protein RecA (374 aa).

An ATP-binding site is contributed by 77-84 (GPESSGKT). A disordered region spans residues 355-374 (AAKTAAADKSAPAKASEAAA).

This sequence belongs to the RecA family.

The protein localises to the cytoplasm. Its function is as follows. Can catalyze the hydrolysis of ATP in the presence of single-stranded DNA, the ATP-dependent uptake of single-stranded DNA by duplex DNA, and the ATP-dependent hybridization of homologous single-stranded DNAs. It interacts with LexA causing its activation and leading to its autocatalytic cleavage. This is Protein RecA from Synechococcus sp. (strain CC9605).